The chain runs to 1226 residues: 3-hydroxy-3-methylglutaryl-coenzyme A reductase (1226 aa).

5 helical membrane-spanning segments follow: residues 17–37 (IETI…ILSG), 224–244 (ILVV…LFLA), 252–272 (FWLS…TLPM), 337–357 (VGNM…VGVN), and 373–393 (LLAM…TIMV). The region spanning 223–391 (DILVVLTGYI…FTLYTAVLTI (169 aa)) is the SSD domain. Residues 428 to 449 (LSRKSSKQSVTEPETTKNLRQR) form a disordered region. Over residues 434 to 445 (KQSVTEPETTKN) the composition is skewed to polar residues. The helical transmembrane segment at 481–501 (LLLIASFLTLHILNFCTTLTS) threads the bilayer. Disordered regions lie at residues 683-702 (APAP…PPPL) and 722-742 (LPIR…EVEP). A compositionally biased stretch (pro residues) spans 685-702 (APAPAPEPEPPVNRPPPL). Residue E869 is the Charge relay system of the active site. CoA is bound at residue 875-881 (STSRGCK). Residues 936 to 938 (SRF) and 963 to 971 (DAMGMNMIS) contribute to the NADP(+) site. K1001 acts as the Charge relay system in catalysis. 1030–1032 (VLK) is a CoA binding site. The active-site Charge relay system is D1077. The chain crosses the membrane as a helical span at residues 1150–1170 (IIASAVMAGELSLISALAAGH). Residue 1174–1175 (AH) participates in CoA binding. Residue H1175 is the Proton donor of the active site. 1179–1180 (NR) serves as a coordination point for NADP(+). Positions 1182–1226 (QLNTPMPSRPHTPGPEDVSHVQQLPTPSASDDKGVTAQGYVVEAK) are disordered. A compositionally biased stretch (polar residues) spans 1201-1210 (HVQQLPTPSA).

It belongs to the HMG-CoA reductase family.

It localises to the endoplasmic reticulum membrane. The enzyme catalyses (R)-mevalonate + 2 NADP(+) + CoA = (3S)-3-hydroxy-3-methylglutaryl-CoA + 2 NADPH + 2 H(+). The protein operates within metabolic intermediate biosynthesis; (R)-mevalonate biosynthesis; (R)-mevalonate from acetyl-CoA: step 3/3. In terms of biological role, HMG-CoA reductase; part of the first module of ergosterol biosynthesis pathway that includes the early steps of the pathway, conserved across all eukaryotes, and which results in the formation of mevalonate from acetyl-coenzyme A (acetyl-CoA). This module also plays a key role in the biosynthesis of triterpenes such as ganoderic acids (GA), a group of highly oxygenated lanostane-type triterpenoids which are well recognized as a main group of unique bioactive compounds in the medicinal mushroom Ganoderma lucidum. In this module, the acetyl-CoA acetyltransferase catalyzes the formation of acetoacetyl-CoA. The hydroxymethylglutaryl-CoA synthase HMGS then condenses acetyl-CoA with acetoacetyl-CoA to form HMG-CoA. The rate-limiting step of the early module is the reduction to mevalonate by the 3-hydroxy-3-methylglutaryl-coenzyme A (HMG-CoA) reductase. The chain is 3-hydroxy-3-methylglutaryl-coenzyme A reductase from Ganoderma lucidum (Ling zhi medicinal fungus).